A 254-amino-acid polypeptide reads, in one-letter code: Large ribosomal subunit protein uL2 (254 aa).

This sequence belongs to the universal ribosomal protein uL2 family. In terms of assembly, component of the large ribosomal subunit. Mature ribosomes consist of a small (40S) and a large (60S) subunit. The 40S subunit contains about 32 different proteins and 1 molecule of RNA (18S). The 60S subunit contains 45 different proteins and 3 molecules of RNA (25S, 5.8S and 5S).

The protein resides in the cytoplasm. Functionally, component of the ribosome, a large ribonucleoprotein complex responsible for the synthesis of proteins in the cell. The small ribosomal subunit (SSU) binds messenger RNAs (mRNAs) and translates the encoded message by selecting cognate aminoacyl-transfer RNA (tRNA) molecules. The large subunit (LSU) contains the ribosomal catalytic site termed the peptidyl transferase center (PTC), which catalyzes the formation of peptide bonds, thereby polymerizing the amino acids delivered by tRNAs into a polypeptide chain. The nascent polypeptides leave the ribosome through a tunnel in the LSU and interact with protein factors that function in enzymatic processing, targeting, and the membrane insertion of nascent chains at the exit of the ribosomal tunnel. This Candida albicans (strain SC5314 / ATCC MYA-2876) (Yeast) protein is Large ribosomal subunit protein uL2.